The following is a 228-amino-acid chain: Urease accessory protein UreF (228 aa).

It belongs to the UreF family. As to quaternary structure, ureD, UreF and UreG form a complex that acts as a GTP-hydrolysis-dependent molecular chaperone, activating the urease apoprotein by helping to assemble the nickel containing metallocenter of UreC. The UreE protein probably delivers the nickel.

It is found in the cytoplasm. Functionally, required for maturation of urease via the functional incorporation of the urease nickel metallocenter. This Dechloromonas aromatica (strain RCB) protein is Urease accessory protein UreF.